A 95-amino-acid polypeptide reads, in one-letter code: Protein TusB (95 aa).

This sequence belongs to the DsrH/TusB family. In terms of assembly, heterohexamer, formed by a dimer of trimers. The hexameric TusBCD complex contains 2 copies each of TusB, TusC and TusD. The TusBCD complex interacts with TusE.

Its subcellular location is the cytoplasm. Part of a sulfur-relay system required for 2-thiolation of 5-methylaminomethyl-2-thiouridine (mnm(5)s(2)U) at tRNA wobble positions. This chain is Protein TusB, found in Cronobacter sakazakii (strain ATCC BAA-894) (Enterobacter sakazakii).